A 267-amino-acid chain; its full sequence is NAD kinase 2 (267 aa).

Asp-52 (proton acceptor) is an active-site residue. NAD(+) is bound by residues 52-53 (DA), 124-125 (NE), Arg-151, Asp-153, 164-169 (TAYNKS), and Ala-188.

This sequence belongs to the NAD kinase family. A divalent metal cation is required as a cofactor.

Its subcellular location is the cytoplasm. The catalysed reaction is NAD(+) + ATP = ADP + NADP(+) + H(+). Involved in the regulation of the intracellular balance of NAD and NADP, and is a key enzyme in the biosynthesis of NADP. Catalyzes specifically the phosphorylation on 2'-hydroxyl of the adenosine moiety of NAD to yield NADP. This is NAD kinase 2 from Bacillus cereus (strain ATCC 10987 / NRS 248).